The chain runs to 846 residues: MAKRFSAMKDFARCKKPRLDVSVTRGSARPSPPRNNFDGILWDDDDDVILMATQLAEAEIEAEERKKKGGTEVDIGNSEVTFSEFAPTFQGSTSTQQMFPPPPPPQKKPTSLDMDAIFADDDDFDFLAVTLMDSEPQKMPEPKTSTSRITTSSISVQQKTTTTTTINATQSRQQEHQLKFLMDRIEALKRENAQLEKNLGDSKERNEIKSGEVSLLRDELKHLRQQLQASKMEKLALADETNRDCNKKVAEAAKQIAAKDIELKIKNAEFSKLKTQQKAHERSMNSSMSILQAAPDPLEKRLSLRLNRLNIHRSVPGLKTDNGSVFEYSENEDQTKKRRNHFELELKQLLLHYARLQAKPESVDNLLPRILSSVGKVFTEFASYAQSLDFPHNCMLYPYNPHNLEEEVHRISLTHQSCLYDNEKAVPLRRFIATLALICRREERISRGLTEWKENDLGLLDMAIEAITKLGFSYEVGQHFGLLEALTSLLNSLLQENALLQHNEELLFDLLKQLVFTRPSPWVFAELSSCFLSCLRHPQLMDKMCVNSPKDCFVSDRVRSVYRFGPDSCLLQVYAGLLELCFFSETPLRQDYFQLLLKIGGNHVRFAFECFKNPPDFILEMLPYFADDGDEDSSDGTLMKTGTSLSFNSTGAVQGSVSNGSTSASVSNPNQNSNSSTTQRGKGCECYVKLCLSAVTIVFQVMHQWMLHSRKAGTEEVGEISRIAVHLLSLVFHEYYLTCLFRDSEETTKHYLSLICNWWSEHANLLGFQSIHLRLLNQLVKAHFMLKPLHLEAKPNNPVNDLSEWKRIVKNADDQRAVKSAVTVDPSKLLNTDFFSALKREENTFE.

Disordered regions lie at residues Asp-20–Ile-40, Gln-90–Pro-109, and Glu-135–Thr-162. Residues Thr-144–Thr-162 show a composition bias toward low complexity. Coiled-coil stretches lie at residues Ala-168 to Glu-240 and Glu-327 to Lys-359. Residues Glu-504–Leu-510 carry the EEXXXDL motif motif. The segment at Gly-651–Gly-681 is disordered. Residues Gly-655–Ser-676 show a composition bias toward low complexity.

This sequence belongs to the ATRIP family. As to quaternary structure, interacts with ATR/mei-41. As to expression, highly expressed in the oocyte and nurse cells from stage 5 onward and in embryos prior to during nuclear division 14. Then, it decreases to background levels during interphase 14. Weakly or not expressed in stage embryos and imaginal disks.

The protein resides in the cytoplasm. In terms of biological role, DNA damage checkpoint protein required for chromosome break repair and for genomic stability during development. The protein is ATR-interacting protein mus304 (mus304) of Drosophila melanogaster (Fruit fly).